The primary structure comprises 380 residues: Cytochrome b (380 aa).

A run of 4 helical transmembrane segments spans residues 34–54 (FGSL…LLAA), 78–99 (WLIR…YLHI), 114–134 (WNTG…GYVL), and 179–199 (FFTL…IHLT). Heme b contacts are provided by His-84 and His-98. Heme b is bound by residues His-183 and His-197. His-202 is an a ubiquinone binding site. 4 consecutive transmembrane segments (helical) span residues 227 to 247 (LKDI…ALFS), 289 to 309 (LGGV…PLLH), 321 to 341 (LSQL…WVGS), and 348 to 368 (FMII…VLFP).

It belongs to the cytochrome b family. The cytochrome bc1 complex contains 11 subunits: 3 respiratory subunits (MT-CYB, CYC1 and UQCRFS1), 2 core proteins (UQCRC1 and UQCRC2) and 6 low-molecular weight proteins (UQCRH/QCR6, UQCRB/QCR7, UQCRQ/QCR8, UQCR10/QCR9, UQCR11/QCR10 and a cleavage product of UQCRFS1). This cytochrome bc1 complex then forms a dimer. Requires heme b as cofactor.

The protein resides in the mitochondrion inner membrane. Its function is as follows. Component of the ubiquinol-cytochrome c reductase complex (complex III or cytochrome b-c1 complex) that is part of the mitochondrial respiratory chain. The b-c1 complex mediates electron transfer from ubiquinol to cytochrome c. Contributes to the generation of a proton gradient across the mitochondrial membrane that is then used for ATP synthesis. In Anthropoides virgo (Demoiselle crane), this protein is Cytochrome b (MT-CYB).